The primary structure comprises 279 residues: Large ribosomal subunit protein uL2 (279 aa).

Residues 222-264 are disordered; the sequence is GVAMNPVDHPHGGGEGRTSGGRNPVTPAGKPTKGAKTRVNKAT.

Belongs to the universal ribosomal protein uL2 family. As to quaternary structure, part of the 50S ribosomal subunit. Forms a bridge to the 30S subunit in the 70S ribosome.

In terms of biological role, one of the primary rRNA binding proteins. Required for association of the 30S and 50S subunits to form the 70S ribosome, for tRNA binding and peptide bond formation. It has been suggested to have peptidyltransferase activity; this is somewhat controversial. Makes several contacts with the 16S rRNA in the 70S ribosome. The polypeptide is Large ribosomal subunit protein uL2 (Caulobacter sp. (strain K31)).